The primary structure comprises 645 residues: Acetyl-coenzyme A synthetase (645 aa).

CoA is bound by residues 190–193 (RGGR) and Thr-308. Residues 384–386 (GEP), 408–413 (DTWWQT), Asp-497, and Arg-512 each bind ATP. Ser-520 contributes to the CoA binding site. Arg-523 lines the ATP pocket. Val-534, His-536, and Val-539 together coordinate Mg(2+). Lys-606 carries the N6-acetyllysine modification.

Belongs to the ATP-dependent AMP-binding enzyme family. Mg(2+) is required as a cofactor. In terms of processing, acetylated. Deacetylation by the SIR2-homolog deacetylase activates the enzyme.

The catalysed reaction is acetate + ATP + CoA = acetyl-CoA + AMP + diphosphate. Its function is as follows. Catalyzes the conversion of acetate into acetyl-CoA (AcCoA), an essential intermediate at the junction of anabolic and catabolic pathways. AcsA undergoes a two-step reaction. In the first half reaction, AcsA combines acetate with ATP to form acetyl-adenylate (AcAMP) intermediate. In the second half reaction, it can then transfer the acetyl group from AcAMP to the sulfhydryl group of CoA, forming the product AcCoA. This Saccharophagus degradans (strain 2-40 / ATCC 43961 / DSM 17024) protein is Acetyl-coenzyme A synthetase.